The chain runs to 406 residues: Argininosuccinate synthase (406 aa).

9–17 (AYSGGLDTS) contacts ATP. Tyr-86 is an L-citrulline binding site. Gly-116 lines the ATP pocket. Residues Thr-118, Asn-122, and Asp-123 each coordinate L-aspartate. Asn-122 contributes to the L-citrulline binding site. Positions 126, 174, 183, 259, and 271 each coordinate L-citrulline.

This sequence belongs to the argininosuccinate synthase family. Type 1 subfamily. In terms of assembly, homotetramer.

The protein resides in the cytoplasm. The catalysed reaction is L-citrulline + L-aspartate + ATP = 2-(N(omega)-L-arginino)succinate + AMP + diphosphate + H(+). It participates in amino-acid biosynthesis; L-arginine biosynthesis; L-arginine from L-ornithine and carbamoyl phosphate: step 2/3. In Geobacillus thermodenitrificans (strain NG80-2), this protein is Argininosuccinate synthase.